We begin with the raw amino-acid sequence, 253 residues long: Ribosomal RNA small subunit methyltransferase A (253 aa).

S-adenosyl-L-methionine is bound by residues His-12, Leu-14, Gly-39, Glu-60, Asp-81, and Asn-104.

The protein belongs to the class I-like SAM-binding methyltransferase superfamily. rRNA adenine N(6)-methyltransferase family. RsmA subfamily.

The protein localises to the cytoplasm. The enzyme catalyses adenosine(1518)/adenosine(1519) in 16S rRNA + 4 S-adenosyl-L-methionine = N(6)-dimethyladenosine(1518)/N(6)-dimethyladenosine(1519) in 16S rRNA + 4 S-adenosyl-L-homocysteine + 4 H(+). Functionally, specifically dimethylates two adjacent adenosines (A1518 and A1519) in the loop of a conserved hairpin near the 3'-end of 16S rRNA in the 30S particle. May play a critical role in biogenesis of 30S subunits. This is Ribosomal RNA small subunit methyltransferase A from Paracidovorax citrulli (strain AAC00-1) (Acidovorax citrulli).